We begin with the raw amino-acid sequence, 109 residues long: Cyclic di-AMP receptor A (109 aa).

Positions 21, 25, 28, 35, 36, 37, 41, 47, 92, and 94 each coordinate 3',3'-c-di-AMP.

As to quaternary structure, homotrimer.

Its subcellular location is the cytoplasm. Its function is as follows. Binds cyclic di-AMP (c-di-AMP) and is probably involved in c-di-AMP-mediated signaling pathways. In vitro, can also bind cyclic GMP-AMP (3'3'-cGAMP), with lower affinity, but not c-di-GMP or 2'3'-cGAMP. In Bacillus subtilis (strain 168), this protein is Cyclic di-AMP receptor A.